A 318-amino-acid polypeptide reads, in one-letter code: Ribonuclease Z (318 aa).

Zn(2+) is bound by residues H62, H64, D66, H67, H139, D210, and H268. D66 (proton acceptor) is an active-site residue.

It belongs to the RNase Z family. In terms of assembly, homodimer. Zn(2+) is required as a cofactor.

The catalysed reaction is Endonucleolytic cleavage of RNA, removing extra 3' nucleotides from tRNA precursor, generating 3' termini of tRNAs. A 3'-hydroxy group is left at the tRNA terminus and a 5'-phosphoryl group is left at the trailer molecule.. Functionally, zinc phosphodiesterase, which displays some tRNA 3'-processing endonuclease activity. Probably involved in tRNA maturation, by removing a 3'-trailer from precursor tRNA. The protein is Ribonuclease Z of Microcystis aeruginosa (strain NIES-843 / IAM M-2473).